The sequence spans 548 residues: GLC7-interacting protein 2 (548 aa).

Basic and acidic residues predominate over residues 1-23 (MYIKAEQKPQQFERKNEKLDRNK). Disordered regions lie at residues 1 to 54 (MYIK…STEE) and 118 to 143 (VESL…STVP). Ser-51 carries the post-translational modification Phosphoserine. Thr-52 carries the phosphothreonine modification. The residue at position 155 (Ser-155) is a Phosphoserine. A disordered region spans residues 191-212 (RSKSLPTTPGIRSGNGVQARDG). Phosphoserine is present on residues Ser-221 and Ser-238. Residues 293-346 (FAHPAKISNPNNGKGTNNTKLRKSKRFQNLLKNRTDMPPSKSNKKFVNGGGAHE) form a disordered region. Positions 419–534 (HNGNDCNGVA…NNNGNNYKVD (116 aa)) constitute a CBM21 domain.

Interacts with phosphatase 1 (GLC7).

This chain is GLC7-interacting protein 2 (GIP2), found in Saccharomyces cerevisiae (strain ATCC 204508 / S288c) (Baker's yeast).